Consider the following 298-residue polypeptide: Troponin T, cardiac muscle (298 aa).

Residues 1–70 (MSDIEEVVEE…EAKEAEDGPM (70 aa)) are compositionally biased toward acidic residues. 2 disordered regions span residues 1–95 (MSDI…GERV) and 120–219 (FENR…EKKK). Ser2 carries the post-translational modification N-acetylserine. Phosphoserine; by CK2 is present on Ser2. 2 stretches are compositionally biased toward basic and acidic residues: residues 120-183 (FENR…DEAR) and 203-219 (QTERKSGKRQTEREKKK). Thr204 is subject to Phosphothreonine; by PKC/PRKCA. Ser208 carries the post-translational modification Phosphoserine; by PKC/PRKCA. Residue Thr213 is modified to Phosphothreonine; by PKC/PRKCA and RAF1. Residue Thr294 is modified to Phosphothreonine; by PKC/PRKCA.

Belongs to the troponin T family. Post-translationally, phosphorylation at Thr-213 by PRKCA induces significant reduction in myofilament calcium sensitivity and actomyosin ATPase activity. As to expression, heart. The fetal heart shows a greater expression in the atrium than in the ventricle, while the adult heart shows a greater expression in the ventricle than in the atrium. Isoform 6 predominates in normal adult heart. Isoforms 1, 7 and 8 are expressed in fetal heart. Isoform 7 is also expressed in failing adult heart.

Troponin T is the tropomyosin-binding subunit of troponin, the thin filament regulatory complex which confers calcium-sensitivity to striated muscle actomyosin ATPase activity. The sequence is that of Troponin T, cardiac muscle (TNNT2) from Homo sapiens (Human).